The primary structure comprises 59 residues: UPF0434 protein HDEF_0234 (59 aa).

The protein belongs to the UPF0434 family.

The chain is UPF0434 protein HDEF_0234 from Hamiltonella defensa subsp. Acyrthosiphon pisum (strain 5AT).